The sequence spans 273 residues: Tryptase (273 aa).

The first 18 residues, 1 to 18 (MLKLLLLTLPLLSSLVHA), serve as a signal peptide directing secretion. Residues 19 to 28 (APGPAMTREG) constitute a propeptide, activation peptide. A Peptidase S1 domain is found at 29 to 270 (IVGGQEAHGN…YLDWIHHYVP (242 aa)). Residue asparagine 49 is glycosylated (N-linked (GlcNAc...) asparagine). Cysteine 57 and cysteine 73 are disulfide-bonded. Catalysis depends on charge relay system residues histidine 72 and aspartate 119. Asparagine 130 carries an N-linked (GlcNAc...) asparagine glycan. 3 disulfide bridges follow: cysteine 153–cysteine 228, cysteine 186–cysteine 209, and cysteine 218–cysteine 246. The active-site Charge relay system is serine 222.

The protein belongs to the peptidase S1 family. Tryptase subfamily.

The catalysed reaction is Preferential cleavage: Arg-|-Xaa, Lys-|-Xaa, but with more restricted specificity than trypsin.. Its function is as follows. Tryptase is the major neutral protease present in mast cells and is secreted upon the coupled activation-degranulation response of this cell type. May play a role in innate immunity. In Mus musculus (Mouse), this protein is Tryptase (Tpsab1).